The following is a 94-amino-acid chain: Co-chaperonin GroES (94 aa).

It belongs to the GroES chaperonin family. As to quaternary structure, heptamer of 7 subunits arranged in a ring. Interacts with the chaperonin GroEL.

It localises to the cytoplasm. Its function is as follows. Together with the chaperonin GroEL, plays an essential role in assisting protein folding. The GroEL-GroES system forms a nano-cage that allows encapsulation of the non-native substrate proteins and provides a physical environment optimized to promote and accelerate protein folding. GroES binds to the apical surface of the GroEL ring, thereby capping the opening of the GroEL channel. This is Co-chaperonin GroES from Halalkalibacterium halodurans (strain ATCC BAA-125 / DSM 18197 / FERM 7344 / JCM 9153 / C-125) (Bacillus halodurans).